Consider the following 312-residue polypeptide: Pyridoxal 5'-phosphate synthase subunit PDX1 (312 aa).

Asp-43 serves as a coordination point for D-ribose 5-phosphate. Lys-100 acts as the Schiff-base intermediate with D-ribose 5-phosphate in catalysis. Gly-172 contacts D-ribose 5-phosphate. Arg-184 contacts D-glyceraldehyde 3-phosphate. D-ribose 5-phosphate is bound by residues Gly-233 and 254–255; that span reads GS.

It belongs to the PdxS/SNZ family.

It catalyses the reaction aldehydo-D-ribose 5-phosphate + D-glyceraldehyde 3-phosphate + L-glutamine = pyridoxal 5'-phosphate + L-glutamate + phosphate + 3 H2O + H(+). The protein operates within cofactor biosynthesis; pyridoxal 5'-phosphate biosynthesis. Its function is as follows. Catalyzes the formation of pyridoxal 5'-phosphate from ribose 5-phosphate (RBP), glyceraldehyde 3-phosphate (G3P) and ammonia. The ammonia is provided by PDX2. Can also use ribulose 5-phosphate and dihydroxyacetone phosphate as substrates, resulting from enzyme-catalyzed isomerization of RBP and G3P, respectively. Also plays an indirect role in resistance to singlet oxygen-generating photosensitizers. This chain is Pyridoxal 5'-phosphate synthase subunit PDX1 (PDX1), found in Phaseolus vulgaris (Kidney bean).